The primary structure comprises 105 residues: Defensin-like protein 106 (105 aa).

The signal sequence occupies residues 1–24 (MANTPKTLIAFVFSVIVIISYVHC). Cystine bridges form between Cys-57-Cys-94, Cys-63-Cys-87, Cys-73-Cys-92, and Cys-77-Cys-93.

This sequence belongs to the DEFL family.

It is found in the secreted. The chain is Defensin-like protein 106 from Arabidopsis thaliana (Mouse-ear cress).